We begin with the raw amino-acid sequence, 501 residues long: Arabinose import ATP-binding protein AraG (501 aa).

ABC transporter domains follow at residues 4–239 and 252–495; these read LEFN…MVGR and LGDN…LPDK. 36–43 is a binding site for ATP; sequence GENGAGKS.

The protein belongs to the ABC transporter superfamily. Arabinose importer (TC 3.A.1.2.2) family. In terms of assembly, the complex is composed of two ATP-binding proteins (AraG), two transmembrane proteins (AraH) and a solute-binding protein (AraF).

The protein localises to the cell inner membrane. It catalyses the reaction L-arabinose(out) + ATP + H2O = L-arabinose(in) + ADP + phosphate + H(+). Its function is as follows. Part of the ABC transporter complex AraFGH involved in arabinose import. Responsible for energy coupling to the transport system. This is Arabinose import ATP-binding protein AraG from Rhizobium etli (strain ATCC 51251 / DSM 11541 / JCM 21823 / NBRC 15573 / CFN 42).